A 290-amino-acid chain; its full sequence is uncharacterized protein (290 aa).

In terms of domain architecture, AB hydrolase-1 spans 30 to 274 (PTILLLHGFP…YDTGHFALET (245 aa)). Residue histidine 269 is part of the active site.

The protein belongs to the DmpD/TodF/XylF esterase family.

This is an uncharacterized protein from Saccharomyces cerevisiae (strain ATCC 204508 / S288c) (Baker's yeast).